The chain runs to 143 residues: Transcription antitermination protein NusB (143 aa).

This sequence belongs to the NusB family.

Involved in transcription antitermination. Required for transcription of ribosomal RNA (rRNA) genes. Binds specifically to the boxA antiterminator sequence of the ribosomal RNA (rrn) operons. The polypeptide is Transcription antitermination protein NusB (Dehalococcoides mccartyi (strain CBDB1)).